The chain runs to 207 residues: Large ribosomal subunit protein uL3c (207 aa).

The interval 115 to 151 (IGKGFAGNQKRHNFSRGPMTHGSKNHRLPGSIGAGST) is disordered.

Belongs to the universal ribosomal protein uL3 family. In terms of assembly, part of the 50S ribosomal subunit.

The protein resides in the plastid. It localises to the chloroplast. Its function is as follows. One of the primary rRNA binding proteins, it binds directly near the 3'-end of the 23S rRNA, where it nucleates assembly of the 50S subunit. In Emiliania huxleyi (Coccolithophore), this protein is Large ribosomal subunit protein uL3c (rpl3).